The following is a 1373-amino-acid chain: DNA-directed RNA polymerase subunit beta (1373 aa).

Belongs to the RNA polymerase beta chain family. As to quaternary structure, the RNAP catalytic core consists of 2 alpha, 1 beta, 1 beta' and 1 omega subunit. When a sigma factor is associated with the core the holoenzyme is formed, which can initiate transcription.

It carries out the reaction RNA(n) + a ribonucleoside 5'-triphosphate = RNA(n+1) + diphosphate. In terms of biological role, DNA-dependent RNA polymerase catalyzes the transcription of DNA into RNA using the four ribonucleoside triphosphates as substrates. The protein is DNA-directed RNA polymerase subunit beta of Rickettsia massiliae.